Reading from the N-terminus, the 366-residue chain is S-adenosylmethionine:tRNA ribosyltransferase-isomerase (366 aa).

This sequence belongs to the QueA family. As to quaternary structure, monomer.

It localises to the cytoplasm. The catalysed reaction is 7-aminomethyl-7-carbaguanosine(34) in tRNA + S-adenosyl-L-methionine = epoxyqueuosine(34) in tRNA + adenine + L-methionine + 2 H(+). Its pathway is tRNA modification; tRNA-queuosine biosynthesis. Its function is as follows. Transfers and isomerizes the ribose moiety from AdoMet to the 7-aminomethyl group of 7-deazaguanine (preQ1-tRNA) to give epoxyqueuosine (oQ-tRNA). This Methylorubrum populi (strain ATCC BAA-705 / NCIMB 13946 / BJ001) (Methylobacterium populi) protein is S-adenosylmethionine:tRNA ribosyltransferase-isomerase.